The primary structure comprises 130 residues: Ion transport peptide (130 aa).

3 disulfide bridges follow: Cys62–Cys98, Cys78–Cys94, and Cys81–Cys107. Leu127 is modified (leucine amide).

It belongs to the arthropod CHH/MIH/GIH/VIH hormone family. In terms of tissue distribution, brain and corpus cardiacum.

The protein resides in the secreted. In terms of biological role, stimulates salt and water reabsorption and inhibits acid secretion in the ileum of S.gregaria. This is Ion transport peptide from Schistocerca gregaria (Desert locust).